A 594-amino-acid chain; its full sequence is UvrABC system protein C (594 aa).

The GIY-YIG domain occupies 17-94 (LEPGCYLMKD…IKQYQPRYNI (78 aa)). One can recognise a UVR domain in the interval 199–234 (KTILHHLEDRMNKASEQLDFEQAKEYRDMIQHIHNL).

This sequence belongs to the UvrC family. Interacts with UvrB in an incision complex.

It localises to the cytoplasm. Its function is as follows. The UvrABC repair system catalyzes the recognition and processing of DNA lesions. UvrC both incises the 5' and 3' sides of the lesion. The N-terminal half is responsible for the 3' incision and the C-terminal half is responsible for the 5' incision. The protein is UvrABC system protein C of Staphylococcus epidermidis (strain ATCC 12228 / FDA PCI 1200).